A 531-amino-acid polypeptide reads, in one-letter code: Arginine--tRNA ligase (531 aa).

A 'HIGH' region motif is present at residues 113–123 (ANPTGPLHIGH).

It belongs to the class-I aminoacyl-tRNA synthetase family. Monomer.

The protein resides in the cytoplasm. It catalyses the reaction tRNA(Arg) + L-arginine + ATP = L-arginyl-tRNA(Arg) + AMP + diphosphate. This Campylobacter fetus subsp. fetus (strain 82-40) protein is Arginine--tRNA ligase.